Reading from the N-terminus, the 269-residue chain is Adenylate kinase (269 aa).

ATP is bound at residue 61–66 (GAGKGT). The segment at 81-110 (ATGDMLREQVARQTELGKAAKQIMDQGGLV) is NMP. Residues Thr82, Arg87, 108 to 110 (GLV), 137 to 140 (GFPR), and Gln144 contribute to the AMP site. The segment at 178–215 (GRLVHPASGRSYHKEFNPPKKPMTDDITGEPLIQRSDD) is LID. Residues Arg179 and 188-189 (SY) each bind ATP. 2 residues coordinate AMP: Arg212 and Arg223. Residue Gln251 coordinates ATP.

Belongs to the adenylate kinase family. AK2 subfamily. As to quaternary structure, monomer.

It localises to the cytoplasm. It is found in the cytosol. The protein resides in the mitochondrion intermembrane space. It carries out the reaction AMP + ATP = 2 ADP. Its function is as follows. Catalyzes the reversible transfer of the terminal phosphate group between ATP and AMP. Plays an important role in cellular energy homeostasis and in adenine nucleotide metabolism. Adenylate kinase activity is critical for regulation of the phosphate utilization and the AMP de novo biosynthesis pathways. The chain is Adenylate kinase from Cryptococcus neoformans var. neoformans serotype D (strain B-3501A) (Filobasidiella neoformans).